Reading from the N-terminus, the 139-residue chain is MTARWPDPDRAYIGRYVASLDLRSIKSRTCYRQVLHGFQDVVERHEALDQQVLLAWLRQSSDRWAATTLLHRTRIIDRFLDHFLEAAAIDHNPVEDLREACHIKQCMPVWRALISCDPEQALAQLRQPEPFGSAGRDHG.

This is an uncharacterized protein from Sinorhizobium fredii (strain NBRC 101917 / NGR234).